The chain runs to 84 residues: RNA-binding protein Hfq (84 aa).

The Sm domain maps to 11-71 (DVFLNFIRKN…ISTVMPSTPI (61 aa)).

It belongs to the Hfq family. Homohexamer.

In terms of biological role, RNA chaperone that binds small regulatory RNA (sRNAs) and mRNAs to facilitate mRNA translational regulation in response to envelope stress, environmental stress and changes in metabolite concentrations. Also binds with high specificity to tRNAs. The polypeptide is RNA-binding protein Hfq (Paramagnetospirillum magneticum (strain ATCC 700264 / AMB-1) (Magnetospirillum magneticum)).